A 255-amino-acid chain; its full sequence is Glutamate racemase (255 aa).

Residues 7-8 and 39-40 each bind substrate; these read DS and YG. Cys-70 serves as the catalytic Proton donor/acceptor. 71-72 is a binding site for substrate; the sequence is NT. The active-site Proton donor/acceptor is Cys-181. A substrate-binding site is contributed by 182–183; sequence TH.

Belongs to the aspartate/glutamate racemases family.

It carries out the reaction L-glutamate = D-glutamate. Its pathway is cell wall biogenesis; peptidoglycan biosynthesis. In terms of biological role, provides the (R)-glutamate required for cell wall biosynthesis. The chain is Glutamate racemase from Helicobacter pylori (strain Shi470).